Consider the following 506-residue polypeptide: Histidine ammonia-lyase (506 aa).

Residues 144–146 (ASG) constitute a cross-link (5-imidazolinone (Ala-Gly)). Ser-145 is modified (2,3-didehydroalanine (Ser)).

The protein belongs to the PAL/histidase family. Post-translationally, contains an active site 4-methylidene-imidazol-5-one (MIO), which is formed autocatalytically by cyclization and dehydration of residues Ala-Ser-Gly.

It is found in the cytoplasm. The catalysed reaction is L-histidine = trans-urocanate + NH4(+). Its pathway is amino-acid degradation; L-histidine degradation into L-glutamate; N-formimidoyl-L-glutamate from L-histidine: step 1/3. The chain is Histidine ammonia-lyase from Legionella pneumophila (strain Lens).